The following is a 363-amino-acid chain: 2,5-diketocamphane 1,2-monooxygenase 1 (363 aa).

FMN contacts are provided by residues methionine 74 and threonine 186–serine 194.

It belongs to the bacterial luciferase oxidoreductase family. As to quaternary structure, homodimer. Likely forms a loose transient complex with a P.putida flavin reductase that provides the required FMNH(2) to the enzyme.

It catalyses the reaction (1R,4R)-bornane-2,5-dione + FMNH2 + O2 = (1R,4R)-5-oxo-1,2-campholide + FMN + H2O + H(+). The protein operates within terpene metabolism; (R)-camphor degradation. In terms of biological role, involved in the degradation and assimilation of (+)-camphor, which allows P.putida strain NCIMB 10007 to grow on this enantiomer of camphor as the sole carbon source. Catalyzes the FMNH(2)-dependent lactonization of 2,5-diketocamphane via a Baeyer-Villiger oxidation to produce the unstable lactone 5-oxo-1,2-campholide with (R,R) configuration, that presumably undergoes spontaneous hydrolysis to form 2-oxo-Delta(3)-4,5,5-trimethylcyclopentenylacetate. Is also able to convert (+)-camphor and norcamphor to the corresponding lactone in vitro. Shows no conversion of (-)-camphor, (+)-fenchone, (-)-fenchone, and (+)-nopinone. Acts only on bicyclic ketones; is not active towards monocyclic ketones, aromatic ketones, the aliphatic 2-decanone, 1-indanone and progesterone. The polypeptide is 2,5-diketocamphane 1,2-monooxygenase 1 (Pseudomonas putida (Arthrobacter siderocapsulatus)).